The following is a 377-amino-acid chain: Nuclear pore complex protein NUP54 (377 aa).

The span at 1-18 shows a compositional bias: low complexity; sequence MFGTPSSSPSFGTPSSTP. Residues 1–104 form a disordered region; it reads MFGTPSSSPS…NTAQQQQQTP (104 aa). 7 consecutive repeat copies span residues 2–3, 11–12, 20–21, 27–28, 36–37, 49–50, and 87–88. The interval 2-88 is 7 X 2 AA repeats of F-G; sequence FGTPSSSPSF…FQQQPSSNFG (87 aa). Positions 19–32 are enriched in polar residues; the sequence is AFGTSSPAFGTPSA. Over residues 39 to 104 the composition is skewed to low complexity; that stretch reads PSNPSFSSGG…NTAQQQQQTP (66 aa).

Belongs to the NUP54 family. As to quaternary structure, part of the nuclear pore complex (NPC). The NPC has an eight-fold symmetrical structure comprising a central transport channel and two rings, the cytoplasmic and nuclear rings, to which eight filaments are attached. The cytoplasmic filaments have loose ends, while the nuclear filaments are joined in a distal ring, forming a nuclear basket. NPCs are highly dynamic in configuration and composition, and can be devided in 3 subcomplexes, the NUP62 subcomplex, the NUP107-160 subcomplex and the NUP93 subcomplex, containing approximately 30 different nucleoporin proteins.

The protein localises to the nucleus envelope. Its subcellular location is the nucleus. The protein resides in the nuclear pore complex. The chain is Nuclear pore complex protein NUP54 from Arabidopsis thaliana (Mouse-ear cress).